The following is a 257-amino-acid chain: General L-amino acid transport ATP-binding protein AapP (257 aa).

In terms of domain architecture, ABC transporter spans 18-252 (VEIVNMNKWY…PQHERTKLFL (235 aa)). 50 to 57 (GPSGSGKS) serves as a coordination point for ATP.

It belongs to the ABC transporter superfamily.

Functionally, part of a binding-protein-dependent transport system for L-amino acids, affects the uptake as well as the efflux of these amino acids. Probably responsible for energy coupling to the transport system. The chain is General L-amino acid transport ATP-binding protein AapP (aapP) from Rhizobium johnstonii (strain DSM 114642 / LMG 32736 / 3841) (Rhizobium leguminosarum bv. viciae).